The chain runs to 149 residues: Transcriptional repressor NrdR (149 aa).

A zinc finger lies at 3–34 (CPFCFAVDTKVIDSRLVGEGSSVRRRRQCLVC). Positions 49–139 (PRVIKSNDVR…VYRSFEDIKD (91 aa)) constitute an ATP-cone domain.

This sequence belongs to the NrdR family. The cofactor is Zn(2+).

Functionally, negatively regulates transcription of bacterial ribonucleotide reductase nrd genes and operons by binding to NrdR-boxes. The chain is Transcriptional repressor NrdR from Salmonella schwarzengrund (strain CVM19633).